The chain runs to 720 residues: Probable GTPase-activating protein GYL1 (720 aa).

M1 bears the N-acetylmethionine mark. The segment covering 1-52 (MNSNEDIHEERIEVPRTPHQTQPEKDSDRIALRDEISVPEGDEKAYSDEKVE) has biased composition (basic and acidic residues). Positions 1-132 (MNSNEDIHEE…TSPPLPPRAD (132 aa)) are disordered. T17 bears the Phosphothreonine mark. S37 carries the phosphoserine modification. The span at 54–66 (ATTNASSNFGSNE) shows a compositional bias: polar residues. S73 bears the Phosphoserine mark. The segment covering 95 to 108 (SKTILPSDDLSQQL) has biased composition (polar residues). Positions 111-120 (EESKVEEALK) are enriched in basic and acidic residues. S139 carries the post-translational modification Phosphoserine. Disordered stretches follow at residues 144–164 (SLPPVLAGNKNDQAPLDRPQL) and 179–210 (APHGNATPSKSPTSAVGNSSSSTPPTLPPRRI). The span at 184 to 196 (ATPSKSPTSAVGN) shows a compositional bias: polar residues. Residues 297 to 477 (GIPAAYRLVV…RIGDMVFLEG (181 aa)) enclose the Rab-GAP TBC domain. A Glycyl lysine isopeptide (Lys-Gly) (interchain with G-Cter in SUMO) cross-link involves residue K498. A coiled-coil region spans residues 572 to 696 (QYKSITEKNL…EIKTANKNGT (125 aa)).

It belongs to the GYP5 family. In terms of assembly, interacts with GYP5 and RVS167. Is part of SEC4-containing complexes.

The protein resides in the cytoplasm. The protein localises to the bud. It localises to the bud neck. Probable GTPase-activating protein which stimulates the GTP hydrolysis rate by GYP5 of YPT1 and SEC4. Involved in ER to Golgi trafficking and polarized exocytosis. The chain is Probable GTPase-activating protein GYL1 (GYL1) from Saccharomyces cerevisiae (strain ATCC 204508 / S288c) (Baker's yeast).